The chain runs to 186 residues: uncharacterized protein (186 aa).

The protein belongs to the geranylgeranyl reductase family. ChlP subfamily.

This is an uncharacterized protein from Methanosarcina barkeri.